The primary structure comprises 458 residues: Serine--tRNA ligase (458 aa).

Residue 255–257 coordinates L-serine; it reads TSE. ATP contacts are provided by residues 286 to 288 and valine 302; that span reads RKE. Glutamate 309 is an L-serine binding site. 373 to 376 lines the ATP pocket; it reads ELVS. L-serine is bound at residue threonine 409.

The protein belongs to the class-II aminoacyl-tRNA synthetase family. Type-1 seryl-tRNA synthetase subfamily. Homodimer. The tRNA molecule binds across the dimer.

The protein resides in the cytoplasm. The catalysed reaction is tRNA(Ser) + L-serine + ATP = L-seryl-tRNA(Ser) + AMP + diphosphate + H(+). It carries out the reaction tRNA(Sec) + L-serine + ATP = L-seryl-tRNA(Sec) + AMP + diphosphate + H(+). It functions in the pathway aminoacyl-tRNA biosynthesis; selenocysteinyl-tRNA(Sec) biosynthesis; L-seryl-tRNA(Sec) from L-serine and tRNA(Sec): step 1/1. Catalyzes the attachment of serine to tRNA(Ser). Is also able to aminoacylate tRNA(Sec) with serine, to form the misacylated tRNA L-seryl-tRNA(Sec), which will be further converted into selenocysteinyl-tRNA(Sec). The polypeptide is Serine--tRNA ligase (Ignicoccus hospitalis (strain KIN4/I / DSM 18386 / JCM 14125)).